A 460-amino-acid polypeptide reads, in one-letter code: Diguanylate cyclase DosC (460 aa).

Residue His-98 participates in heme binding. Residues 325–458 (TPLSVLIIDV…GRNRVELWKA (134 aa)) enclose the GGDEF domain. Residue Asp-333 coordinates Mg(2+). Residues Asn-341 and Asp-350 each contribute to the substrate site. Residue Asp-376 participates in Mg(2+) binding. Asp-376 (proton acceptor) is an active-site residue.

It depends on heme as a cofactor. Requires Mg(2+) as cofactor.

It carries out the reaction 2 GTP = 3',3'-c-di-GMP + 2 diphosphate. It participates in purine metabolism; 3',5'-cyclic di-GMP biosynthesis. Its function is as follows. Globin-coupled heme-based oxygen sensor protein displaying diguanylate cyclase (DGC) activity in response to oxygen availability. Thus, catalyzes the synthesis of cyclic diguanylate (c-di-GMP) via the condensation of 2 GTP molecules. Cyclic-di-GMP is a second messenger which controls cell surface-associated traits in bacteria. This is Diguanylate cyclase DosC (dosC) from Shigella boydii serotype 4 (strain Sb227).